Reading from the N-terminus, the 717-residue chain is DNA-binding protein RFX2 (717 aa).

Positions 1-28 (MQNSEGGADSPASVALRPAAQPMPASPQ) are disordered. S26 carries the post-translational modification Phosphoserine. Residues 194-269 (HLQWLLDNYE…YHYYGIRLKP (76 aa)) constitute a DNA-binding region (RFX-type winged-helix). The interval 286 to 318 (RQQPTHQKPRYRPAQKSDSLGDGSAHSNMHGMP) is disordered. The residue at position 411 (S411) is a Phosphoserine. The segment covering 685 to 710 (DGHSSEADVDGRSLGEPLVKRERSDP) has biased composition (basic and acidic residues). A disordered region spans residues 685-717 (DGHSSEADVDGRSLGEPLVKRERSDPSHPLQGI).

The protein belongs to the RFX family. As to quaternary structure, homodimer; probably only forms homodimers in testis. Heterodimer; heterodimerizes with RFX1 and RFX3.

The protein resides in the nucleus. Its subcellular location is the cytoplasm. In terms of biological role, transcription factor that acts as a key regulator of spermatogenesis. Acts by regulating expression of genes required for the haploid phase during spermiogenesis, such as genes required for cilium assembly and function. Recognizes and binds the X-box, a regulatory motif with DNA sequence 5'-GTNRCC(0-3N)RGYAAC-3' present on promoters. Probably activates transcription of the testis-specific histone gene H1-6. The protein is DNA-binding protein RFX2 (Rfx2) of Mus musculus (Mouse).